The sequence spans 498 residues: Envelop protein OPG153 (498 aa).

The cysteines at positions 43 and 342 are disulfide-linked. Residues 352-391 form a disordered region; sequence ATDTGHHQDSKINIKDDDVDDDDYNPKPTPIPEPYPRPPF. A compositionally biased stretch (basic and acidic residues) spans 355–367; it reads TGHHQDSKINIKD. Residues 378-390 are compositionally biased toward pro residues; sequence KPTPIPEPYPRPP.

This sequence belongs to the orthopoxvirus OPG153 protein family. As to quaternary structure, interacts with proteins OPG094 and OPG143. Interacts with OPG154. Interacts with OPG152. Interacts with host laminin.

It is found in the virion membrane. Its function is as follows. Envelop protein that mediates acid-dependent endocytosis into host cells. Plays an important role in endocytic entry of the virus by acting as an acid-sensitive membrane fusion suppressor. Low pH in host endosomes triggers conformational changes to allow de-repression of viral fusion complex activity and membrane fusion within vesicles. Also plays a role in bridging the mature virion with structural protein OPG152. The sequence is that of Envelop protein OPG153 (Protein OPG153) from Variola virus (isolate Human/India/Ind3/1967) (VARV).